The chain runs to 159 residues: Large ribosomal subunit protein uL10 (159 aa).

Belongs to the universal ribosomal protein uL10 family. As to quaternary structure, part of the ribosomal stalk of the 50S ribosomal subunit. The N-terminus interacts with L11 and the large rRNA to form the base of the stalk. The C-terminus forms an elongated spine to which L12 dimers bind in a sequential fashion forming a multimeric L10(L12)X complex.

Functionally, forms part of the ribosomal stalk, playing a central role in the interaction of the ribosome with GTP-bound translation factors. This Campylobacter jejuni subsp. jejuni serotype O:6 (strain 81116 / NCTC 11828) protein is Large ribosomal subunit protein uL10.